A 231-amino-acid chain; its full sequence is ATP phosphoribosyltransferase (231 aa).

This sequence belongs to the ATP phosphoribosyltransferase family. Short subfamily. In terms of assembly, heteromultimer composed of HisG and HisZ subunits.

The protein resides in the cytoplasm. The enzyme catalyses 1-(5-phospho-beta-D-ribosyl)-ATP + diphosphate = 5-phospho-alpha-D-ribose 1-diphosphate + ATP. The protein operates within amino-acid biosynthesis; L-histidine biosynthesis; L-histidine from 5-phospho-alpha-D-ribose 1-diphosphate: step 1/9. Its function is as follows. Catalyzes the condensation of ATP and 5-phosphoribose 1-diphosphate to form N'-(5'-phosphoribosyl)-ATP (PR-ATP). Has a crucial role in the pathway because the rate of histidine biosynthesis seems to be controlled primarily by regulation of HisG enzymatic activity. In Brucella melitensis biotype 2 (strain ATCC 23457), this protein is ATP phosphoribosyltransferase.